The following is a 103-amino-acid chain: Small ribosomal subunit protein uS10 (103 aa).

This sequence belongs to the universal ribosomal protein uS10 family. Part of the 30S ribosomal subunit.

In terms of biological role, involved in the binding of tRNA to the ribosomes. The sequence is that of Small ribosomal subunit protein uS10 from Sulfurovum sp. (strain NBC37-1).